We begin with the raw amino-acid sequence, 345 residues long: N-acetyl-gamma-glutamyl-phosphate reductase (345 aa).

Cys-142 is a catalytic residue.

Belongs to the NAGSA dehydrogenase family. Type 1 subfamily.

It localises to the cytoplasm. It catalyses the reaction N-acetyl-L-glutamate 5-semialdehyde + phosphate + NADP(+) = N-acetyl-L-glutamyl 5-phosphate + NADPH + H(+). It functions in the pathway amino-acid biosynthesis; L-arginine biosynthesis; N(2)-acetyl-L-ornithine from L-glutamate: step 3/4. Its function is as follows. Catalyzes the NADPH-dependent reduction of N-acetyl-5-glutamyl phosphate to yield N-acetyl-L-glutamate 5-semialdehyde. This Thermus thermophilus (strain ATCC BAA-163 / DSM 7039 / HB27) protein is N-acetyl-gamma-glutamyl-phosphate reductase.